The chain runs to 759 residues: Fidgetin (759 aa).

4 disordered regions span residues serine 89–proline 111, serine 200–asparagine 237, valine 258–tyrosine 293, and serine 337–glutamate 429. Composition is skewed to pro residues over residues glutamine 221–leucine 232 and glycine 266–threonine 289. 2 stretches are compositionally biased toward polar residues: residues serine 337 to proline 347 and leucine 382 to serine 418. Threonine 400 is subject to Phosphothreonine. Residues alanine 489 and glycine 529 to leucine 534 each bind ATP.

The protein belongs to the AAA ATPase family. Interacts with AKAP8 (via C-terminus). Widely expressed.

Its subcellular location is the nucleus matrix. It localises to the cytoplasm. The protein resides in the cytoskeleton. It is found in the microtubule organizing center. The protein localises to the centrosome. Its function is as follows. ATP-dependent microtubule severing protein. Severs microtubules along their length and depolymerizes their ends, primarily the minus-end, suppressing microtubule growth from and attachment to centrosomes. Microtubule severing may promote rapid reorganization of cellular microtubule arrays and the release of microtubules from the centrosome following nucleation. Microtubule release from the mitotic spindle poles may allow depolymerization of the microtubule end proximal to the spindle pole, leading to poleward microtubule flux and poleward motion of chromosome. The chain is Fidgetin (Fign) from Mus musculus (Mouse).